We begin with the raw amino-acid sequence, 219 residues long: Putative ankyrin repeat protein BB_0399 (219 aa).

ANK repeat units lie at residues 104 to 133 (YKISPISISIINNEFEITKILIDYGISLNQ), 137 to 166 (TGYSPIFWAIYTNNEKIFEFLKESGADLSF), and 170 to 199 (NRKTPMQAAIETENIKLIKSLEKKKIYIDD).

The chain is Putative ankyrin repeat protein BB_0399 from Borreliella burgdorferi (strain ATCC 35210 / DSM 4680 / CIP 102532 / B31) (Borrelia burgdorferi).